The sequence spans 327 residues: Peroxidase 21 (327 aa).

The first 28 residues, 1–28 (MANAKPFCLLGFFCLLLQLFSIFHIGNG), serve as a signal peptide directing secretion. Disulfide bonds link C39–C118, C72–C77, C124–C323, and C204–C231. H70 acts as the Proton acceptor in catalysis. Positions 71, 74, 78, and 80 each coordinate Ca(2+). P167 serves as a coordination point for substrate. Residue N170 is glycosylated (N-linked (GlcNAc...) asparagine). Heme b is bound at residue H197. Residue S198 participates in Ca(2+) binding. Residues D247, T250, and D255 each contribute to the Ca(2+) site.

This sequence belongs to the peroxidase family. Classical plant (class III) peroxidase subfamily. Heme b is required as a cofactor. Ca(2+) serves as cofactor. Preferentially expressed in roots and leaves, slightly in stems.

The enzyme catalyses 2 a phenolic donor + H2O2 = 2 a phenolic radical donor + 2 H2O. Functionally, removal of H(2)O(2), oxidation of toxic reductants, biosynthesis and degradation of lignin, suberization, auxin catabolism, response to environmental stresses such as wounding, pathogen attack and oxidative stress. These functions might be dependent on each isozyme/isoform in each plant tissue. In terms of biological role, might function as heat shock-like defense protein. May be implicated in the systemic acquired resistance response. The sequence is that of Peroxidase 21 (PER21) from Arabidopsis thaliana (Mouse-ear cress).